The primary structure comprises 391 residues: Protein CapJ (391 aa).

The protein operates within capsule biogenesis; capsule polysaccharide biosynthesis. Functionally, required for the biosynthesis of type 1 capsular polysaccharide. The polypeptide is Protein CapJ (capJ) (Staphylococcus aureus).